The following is a 172-amino-acid chain: MTLHVGAEFAPREDDPEDEPRALELDLSVQYGDEITSDVRKTLPKRKLIAEWIEPALFASAQLTVRFVGENEGRTLNAGYRHKDYPTNVLTFAYDAAPDGTVIGDLVLCCPVVEKEAHDQGKPLAAHYAHLLVHGALHAQGYDHETSDEDAAEMEALEVDILAKLGFPNPYQ.

3 residues coordinate Zn(2+): H134, H138, and H144.

The protein belongs to the endoribonuclease YbeY family. Zn(2+) is required as a cofactor.

Its subcellular location is the cytoplasm. Functionally, single strand-specific metallo-endoribonuclease involved in late-stage 70S ribosome quality control and in maturation of the 3' terminus of the 16S rRNA. This Burkholderia cenocepacia (strain HI2424) protein is Endoribonuclease YbeY.